A 279-amino-acid chain; its full sequence is 3-methyl-2-oxobutanoate hydroxymethyltransferase (279 aa).

Mg(2+) contacts are provided by D44 and D83. 3-methyl-2-oxobutanoate contacts are provided by residues 44-45 (DS), D83, and K113. E115 serves as a coordination point for Mg(2+). E182 acts as the Proton acceptor in catalysis.

It belongs to the PanB family. As to quaternary structure, homodecamer; pentamer of dimers. Requires Mg(2+) as cofactor.

It localises to the cytoplasm. The enzyme catalyses 3-methyl-2-oxobutanoate + (6R)-5,10-methylene-5,6,7,8-tetrahydrofolate + H2O = 2-dehydropantoate + (6S)-5,6,7,8-tetrahydrofolate. The protein operates within cofactor biosynthesis; (R)-pantothenate biosynthesis; (R)-pantoate from 3-methyl-2-oxobutanoate: step 1/2. Functionally, catalyzes the reversible reaction in which hydroxymethyl group from 5,10-methylenetetrahydrofolate is transferred onto alpha-ketoisovalerate to form ketopantoate. The chain is 3-methyl-2-oxobutanoate hydroxymethyltransferase from Desulfotalea psychrophila (strain LSv54 / DSM 12343).